The chain runs to 1488 residues: Chromosome partition protein MukB (1488 aa).

34-41 (GGNGAGKS) contacts ATP. Coiled-coil stretches lie at residues 326–413 (LEAD…QTRA), 444–472 (LDTF…QTAH), and 509–602 (RHLA…RRAP). A flexible hinge region spans residues 666 to 783 (PGGAEDQRLN…SLPIFGRAAR (118 aa)). Coiled coils occupy residues 835–923 (EAEI…AKLE), 977–1116 (EMLS…AKAG), and 1209–1265 (VEAI…LQSV).

This sequence belongs to the SMC family. MukB subfamily. As to quaternary structure, homodimerization via its hinge domain. Binds to DNA via its C-terminal region. Interacts, and probably forms a ternary complex, with MukE and MukF via its C-terminal region. The complex formation is stimulated by calcium or magnesium. Interacts with tubulin-related protein FtsZ.

It localises to the cytoplasm. It is found in the nucleoid. Plays a central role in chromosome condensation, segregation and cell cycle progression. Functions as a homodimer, which is essential for chromosome partition. Involved in negative DNA supercoiling in vivo, and by this means organize and compact chromosomes. May achieve or facilitate chromosome segregation by condensation DNA from both sides of a centrally located replisome during cell division. The protein is Chromosome partition protein MukB of Salmonella paratyphi C (strain RKS4594).